Here is a 174-residue protein sequence, read N- to C-terminus: Shikimate kinase 2 (174 aa).

12–17 provides a ligand contact to ATP; sequence GAGKTT. Mg(2+)-binding residues include Thr16 and Asp32. The substrate site is built by Asp34, Arg58, and Gly79. Residues 112–126 form an LID domain region; that stretch reads AEDPEEAQRPSLTGK. Position 120 (Arg120) interacts with ATP. Position 139 (Arg139) interacts with substrate. Gln155 serves as a coordination point for ATP.

The protein belongs to the shikimate kinase family. AroL subfamily. In terms of assembly, monomer. The cofactor is Mg(2+).

Its subcellular location is the cytoplasm. It carries out the reaction shikimate + ATP = 3-phosphoshikimate + ADP + H(+). It participates in metabolic intermediate biosynthesis; chorismate biosynthesis; chorismate from D-erythrose 4-phosphate and phosphoenolpyruvate: step 5/7. Functionally, catalyzes the specific phosphorylation of the 3-hydroxyl group of shikimic acid using ATP as a cosubstrate. The polypeptide is Shikimate kinase 2 (Yersinia pestis bv. Antiqua (strain Antiqua)).